We begin with the raw amino-acid sequence, 273 residues long: Cysteine protease S273R (273 aa).

Active-site residues include His-168 and Asn-187. Gln-226 contacts substrate. The active-site Nucleophile is Cys-232.

It belongs to the peptidase C63 family.

It is found in the host cytoplasm. Its subcellular location is the virion. In terms of biological role, cysteine protease that plays several role during infection including processing of the structural polyprotein or inhibition of the host immune response. Catalyzes the maturation of the pp220 and pp62 polyprotein precursors into core-shell proteins. Plays a role in the disruption of host pyroptosis via specific cleavage of gasdermin D/GSDMD. In addition, strongly decreases the host cGAS-STING signaling by targeting IKBKE via its enzymatic activity. Also impairs host FOXJ1-mediated antiviral effect via degradation of FOXJ1. Cleaves host G3BP1 inducing loss of stress granules formation. Interacts with and induces the degradation of host STAT2 via polyubiquitination of the latter. In Ornithodoros (relapsing fever ticks), this protein is Cysteine protease S273R.